A 412-amino-acid chain; its full sequence is Protein Mb3436c (412 aa).

At Lys227 the chain carries N6-(pyridoxal phosphate)lysine.

It belongs to the DegT/DnrJ/EryC1 family.

This Mycobacterium bovis (strain ATCC BAA-935 / AF2122/97) protein is Protein Mb3436c.